Consider the following 256-residue polypeptide: Small ribosomal subunit protein eS1A (256 aa).

Ala2 is modified (N-acetylalanine; partial).

This sequence belongs to the eukaryotic ribosomal protein eS1 family. As to quaternary structure, component of the small ribosomal subunit. Mature ribosomes consist of a small (40S) and a large (60S) subunit. The 40S subunit contains about 33 different proteins and 1 molecule of RNA (18S). The 60S subunit contains about 49 different proteins and 3 molecules of RNA (25S, 5.8S and 5S).

It is found in the cytoplasm. The protein is Small ribosomal subunit protein eS1A of Debaryomyces hansenii (strain ATCC 36239 / CBS 767 / BCRC 21394 / JCM 1990 / NBRC 0083 / IGC 2968) (Yeast).